The following is a 301-amino-acid chain: Methionyl-tRNA formyltransferase (301 aa).

(6S)-5,6,7,8-tetrahydrofolate is bound at residue Ser-109–Pro-112.

It belongs to the Fmt family.

It carries out the reaction L-methionyl-tRNA(fMet) + (6R)-10-formyltetrahydrofolate = N-formyl-L-methionyl-tRNA(fMet) + (6S)-5,6,7,8-tetrahydrofolate + H(+). Its function is as follows. Attaches a formyl group to the free amino group of methionyl-tRNA(fMet). The formyl group appears to play a dual role in the initiator identity of N-formylmethionyl-tRNA by promoting its recognition by IF2 and preventing the misappropriation of this tRNA by the elongation apparatus. This is Methionyl-tRNA formyltransferase from Campylobacter curvus (strain 525.92).